The sequence spans 251 residues: Triosephosphate isomerase (251 aa).

Residue 9-11 (NWK) coordinates substrate. Histidine 95 acts as the Electrophile in catalysis. Glutamate 167 serves as the catalytic Proton acceptor. Substrate contacts are provided by residues glycine 173, serine 213, and 234 to 235 (GG).

It belongs to the triosephosphate isomerase family. Homodimer.

The protein localises to the cytoplasm. The enzyme catalyses D-glyceraldehyde 3-phosphate = dihydroxyacetone phosphate. The protein operates within carbohydrate biosynthesis; gluconeogenesis. It participates in carbohydrate degradation; glycolysis; D-glyceraldehyde 3-phosphate from glycerone phosphate: step 1/1. Functionally, involved in the gluconeogenesis. Catalyzes stereospecifically the conversion of dihydroxyacetone phosphate (DHAP) to D-glyceraldehyde-3-phosphate (G3P). The chain is Triosephosphate isomerase from Enterococcus faecalis (strain ATCC 700802 / V583).